The primary structure comprises 344 residues: uncharacterized protein (344 aa).

The signal sequence occupies residues 1–28 (MNKKSLNIVATLGILLVLAFSGCVDQSA).

This sequence belongs to the bacterial solute-binding protein 1 family. WtpA subfamily.

This is an uncharacterized protein from Methanococcus maripaludis (strain C7 / ATCC BAA-1331).